We begin with the raw amino-acid sequence, 179 residues long: MPRDEMEACELGDGEGYQPLRLPRVQGKLEEINPIVAAEVAALERRDRSDADYEKVKMLYVIYLRVHEIYDDQARIRLGVRRKKHLGDLTASRGAGLRSFEALSSMIPLPPETGEFDTGGTSSSVRSASGASGGAASTAASGGSASAAASGASGGSASQSDVSSRSRSQQAPGTKGKKQ.

The tract at residues 107 to 179 is disordered; it reads IPLPPETGEF…QAPGTKGKKQ (73 aa). Residues 118 to 171 are compositionally biased toward low complexity; that stretch reads TGGTSSSVRSASGASGGAASTAASGGSASAAASGASGGSASQSDVSSRSRSQQA.

It belongs to the herpesviridae small capsomere-interacting protein family. Interacts with the major capsid protein/MCP.

It is found in the virion. The protein localises to the host nucleus. Participates in the assembly of the infectious particles by decorating the outer surface of the capsid shell and thus forming a layer between the capsid and the tegument. Complexes composed of the major capsid protein and small capsomere-interacting protein/SCP assemble together in the host cytoplasm and are translocated to the nucleus, where they accumulate and participate in capsid assembly. This Equine herpesvirus 2 (strain 86/87) (EHV-2) protein is Small capsomere-interacting protein.